Consider the following 177-residue polypeptide: Ribonuclease M5 (177 aa).

The region spanning 5-99 (KQIIIVEGKT…NKTSKKIGIA (95 aa)) is the Toprim domain. Mg(2+) contacts are provided by E11, D59, and D61.

It belongs to the ribonuclease M5 family. It depends on Mg(2+) as a cofactor.

The protein resides in the cytoplasm. It catalyses the reaction Endonucleolytic cleavage of RNA, removing 21 and 42 nucleotides, respectively, from the 5'- and 3'-termini of a 5S-rRNA precursor.. Functionally, required for correct processing of both the 5' and 3' ends of 5S rRNA precursor. Cleaves both sides of a double-stranded region yielding mature 5S rRNA in one step. This chain is Ribonuclease M5, found in Mycoplasma mycoides subsp. mycoides SC (strain CCUG 32753 / NCTC 10114 / PG1).